Reading from the N-terminus, the 336-residue chain is DNA repair protein XRCC4 (336 aa).

The tract at residues 1–213 (MERKISRIHL…EREKDIKQEG (213 aa)) is interaction with IFFO1. Position 53 is a phosphoserine; by PRKDC (Ser53). Coiled coils occupy residues 131 to 165 (LDTI…FEKC) and 184 to 212 (LNEK…IKQE). Residues 180 to 213 (FILVLNEKKTKIRSLHNKLLNAAQEREKDIKQEG) form an interaction with LIG4 region. Ser193 bears the Phosphoserine; by PRKDC mark. Lys210 is covalently cross-linked (Glycyl lysine isopeptide (Lys-Gly) (interchain with G-Cter in SUMO)). The interval 212–249 (EGETAICSEMTADRDPVYDESTDEESENQTDLSGLASA) is disordered. At Tyr229 the chain carries Phosphotyrosine. Acidic residues predominate over residues 229–239 (YDESTDEESEN). Ser232 is modified (phosphoserine). Phosphothreonine; by CK2 is present on Thr233. Residues Ser237 and Ser256 each carry the phosphoserine modification. Ser260 carries the phosphoserine; by PRKDC modification. The interval 264-336 (TDIAPSRKRR…SSPEDLFDEI (73 aa)) is disordered. The short motif at 270–275 (RKRRQR) is the Nuclear localization signal element. Residue Lys296 forms a Glycyl lysine isopeptide (Lys-Gly) (interchain with G-Cter in ubiquitin) linkage. Phosphoserine; by PRKDC occurs at positions 303, 304, 315, and 320. Over residues 317 to 329 (ENMSLETLRNSSP) the composition is skewed to polar residues. Thr323 is modified (phosphothreonine; by PRKDC). A phosphoserine; by PRKDC mark is found at Ser327 and Ser328.

The protein belongs to the XRCC4-XLF family. XRCC4 subfamily. As to quaternary structure, homodimer and homotetramer in solution. Interacts with NHEJ1/XLF; the interaction is direct and is mediated via a head-to-head interaction between N-terminal head regions. Interacts with LIG4; the LIG4-XRCC4 subcomplex has a 1:2 stoichiometry and XRCC4 is required for LIG4 stability. Component of the core long-range non-homologous end joining (NHEJ) complex (also named DNA-PK complex) composed of PRKDC, LIG4, XRCC4, XRCC6/Ku70, XRCC5/Ku86 and NHEJ1/XLF. Additional component of the NHEJ complex includes PAXX. Following autophosphorylation, PRKDC dissociates from DNA, leading to formation of the short-range NHEJ complex, composed of LIG4, XRCC4, XRCC6/Ku70, XRCC5/Ku86 and NHEJ1/XLF. Interacts with PRKDC; the interaction is direct. Interacts with XRCC6/Ku70; the interaction is direct. Interacts with APTX and APLF. Forms a heterotetramer with IFFO1; the interaction involves LIG4-free XRCC4 and leads to the relocalization of IFFO1 to the sites of DNA damage. Interacts with PNKP; mainly interacts with PNKP when phosphorylated at Thr-233, but is also able to interact at much lower level with PNKP when not unphosphorylated. Interacts with POLL (DNA polymerase lambda). In terms of assembly, interacts with XKR4; interacts with the processed form of XKR4, which is cleaved by caspase. In terms of processing, phosphorylated by PRKDC at the C-terminus in response to DNA damage; Ser-260 and Ser-320 constitute the main phosphorylation sites. Phosphorylations by PRKDC at the C-terminus of XRCC4 and NHEJ1/XLF are highly redundant and regulate ability of the XRCC4-NHEJ1/XLF subcomplex to bridge DNA. Phosphorylation by PRKDC does not prevent interaction with NHEJ1/XLF but disrupts ability to bridge DNA and promotes detachment from DNA. Phosphorylation at Ser-327 and Ser-328 by PRKDC promotes recognition by the SCF(FBXW7) complex and subsequent ubiquitination via 'Lys-63'-linked ubiquitin. Phosphorylation at Thr-233 by CK2 promotes interaction with PNKP; regulating PNKP activity and localization to DNA damage sites. Phosphorylation by CK2 promotes interaction with APTX. Ubiquitinated at Lys-296 by the SCF(FBXW7) complex via 'Lys-63'-linked ubiquitination, thereby promoting double-strand break repair: the SCF(FBXW7) complex specifically recognizes XRCC4 when phosphorylated at Ser-327 and Ser-328 by PRKDC, and 'Lys-63'-linked ubiquitination facilitates DNA non-homologous end joining (NHEJ) by enhancing association with XRCC5/Ku80 and XRCC6/Ku70. Monoubiquitinated. Post-translationally, undergoes proteolytic processing by caspase-3 (CASP3). This generates the protein XRCC4, C-terminus (XRCC4/C), which translocates to the cytoplasm and activates phospholipid scramblase activity of XKR4, thereby promoting phosphatidylserine exposure on apoptotic cell surface. In terms of tissue distribution, widely expressed.

Its subcellular location is the nucleus. The protein localises to the chromosome. It is found in the cytoplasm. In terms of biological role, DNA non-homologous end joining (NHEJ) core factor, required for double-strand break repair and V(D)J recombination. Acts as a scaffold protein that regulates recruitment of other proteins to DNA double-strand breaks (DSBs). Associates with NHEJ1/XLF to form alternating helical filaments that bridge DNA and act like a bandage, holding together the broken DNA until it is repaired. The XRCC4-NHEJ1/XLF subcomplex binds to the DNA fragments of a DSB in a highly diffusive manner and robustly bridges two independent DNA molecules, holding the broken DNA fragments in close proximity to one other. The mobility of the bridges ensures that the ends remain accessible for further processing by other repair factors. Plays a key role in the NHEJ ligation step of the broken DNA during DSB repair via direct interaction with DNA ligase IV (LIG4): the LIG4-XRCC4 subcomplex reseals the DNA breaks after the gap filling is completed. XRCC4 stabilizes LIG4, regulates its subcellular localization and enhances LIG4's joining activity. Binding of the LIG4-XRCC4 subcomplex to DNA ends is dependent on the assembly of the DNA-dependent protein kinase complex DNA-PK to these DNA ends. Promotes displacement of PNKP from processed strand break termini. Functionally, acts as an activator of the phospholipid scramblase activity of XKR4. This form, which is generated upon caspase-3 (CASP3) cleavage, translocates into the cytoplasm and interacts with XKR4, thereby promoting phosphatidylserine scramblase activity of XKR4 and leading to phosphatidylserine exposure on apoptotic cell surface. The chain is DNA repair protein XRCC4 from Homo sapiens (Human).